We begin with the raw amino-acid sequence, 291 residues long: ATP synthase subunit a (291 aa).

The next 5 membrane-spanning stretches (helical) occupy residues 48–68 (IHLDSMGWSIGLGIIFCLVFW), 108–128 (IAPLALTIFVWIFLMNLMDLI), 161–181 (DPNITLGMSLSVFVLILFYSI), 241–261 (LIFILIALLPFWIQWALSVPW), and 262–282 (AIFHILVITLQAFIFMMLTIV).

Belongs to the ATPase A chain family. In terms of assembly, F-type ATPases have 2 components, CF(1) - the catalytic core - and CF(0) - the membrane proton channel. CF(1) has five subunits: alpha(3), beta(3), gamma(1), delta(1), epsilon(1). CF(0) has three main subunits: a(1), b(2) and c(9-12). The alpha and beta chains form an alternating ring which encloses part of the gamma chain. CF(1) is attached to CF(0) by a central stalk formed by the gamma and epsilon chains, while a peripheral stalk is formed by the delta and b chains.

It is found in the cell inner membrane. Its function is as follows. Key component of the proton channel; it plays a direct role in the translocation of protons across the membrane. This chain is ATP synthase subunit a, found in Acinetobacter baylyi (strain ATCC 33305 / BD413 / ADP1).